The primary structure comprises 388 residues: S-adenosylmethionine synthase (388 aa).

His17 is an ATP binding site. Asp19 serves as a coordination point for Mg(2+). Position 45 (Glu45) interacts with K(+). L-methionine is bound by residues Glu58 and Gln106. Residues 106 to 116 (QSAHISQGVDR) form a flexible loop region. ATP is bound by residues 166–168 (DAK), Asp241, 247–248 (RK), Ala264, and Lys268. Residue Asp241 participates in L-methionine binding. L-methionine is bound at residue Lys272.

Belongs to the AdoMet synthase family. Homotetramer; dimer of dimers. The cofactor is Mg(2+). Requires K(+) as cofactor.

It is found in the cytoplasm. It catalyses the reaction L-methionine + ATP + H2O = S-adenosyl-L-methionine + phosphate + diphosphate. It functions in the pathway amino-acid biosynthesis; S-adenosyl-L-methionine biosynthesis; S-adenosyl-L-methionine from L-methionine: step 1/1. Catalyzes the formation of S-adenosylmethionine (AdoMet) from methionine and ATP. The overall synthetic reaction is composed of two sequential steps, AdoMet formation and the subsequent tripolyphosphate hydrolysis which occurs prior to release of AdoMet from the enzyme. The protein is S-adenosylmethionine synthase of Paracoccus denitrificans (strain Pd 1222).